A 247-amino-acid polypeptide reads, in one-letter code: tRNA pseudouridine synthase A (247 aa).

Aspartate 53 functions as the Nucleophile in the catalytic mechanism. Tyrosine 111 serves as a coordination point for substrate.

It belongs to the tRNA pseudouridine synthase TruA family. As to quaternary structure, homodimer.

The catalysed reaction is uridine(38/39/40) in tRNA = pseudouridine(38/39/40) in tRNA. Formation of pseudouridine at positions 38, 39 and 40 in the anticodon stem and loop of transfer RNAs. This Bacillus licheniformis (strain ATCC 14580 / DSM 13 / JCM 2505 / CCUG 7422 / NBRC 12200 / NCIMB 9375 / NCTC 10341 / NRRL NRS-1264 / Gibson 46) protein is tRNA pseudouridine synthase A.